Consider the following 729-residue polypeptide: Probable ATP-dependent RNA helicase DDX17 (729 aa).

A disordered region spans residues 20–115; sequence EAATVASATG…PPKKFGNPGE (96 aa). A Phosphoserine modification is found at S64. The segment covering 86–95 has biased composition (basic and acidic residues); the sequence is GDRDRDRDRG. Residues 96–105 show a composition bias toward gly residues; that stretch reads GFGARGGGGL. 3 positions are modified to N6-acetyllysine; by EP300: K108, K109, and K121. Residue K129 forms a Glycyl lysine isopeptide (Lys-Gly) (interchain with G-Cter in SUMO); alternate linkage. A Glycyl lysine isopeptide (Lys-Gly) (interchain with G-Cter in SUMO1); alternate cross-link involves residue K129. K129 is covalently cross-linked (Glycyl lysine isopeptide (Lys-Gly) (interchain with G-Cter in SUMO2); alternate). Positions 171 to 199 match the Q motif motif; the sequence is FAFHHANFPQYVMDVLMDQHFTEPTPIQC. Positions 202–377 constitute a Helicase ATP-binding domain; sequence FPLALSGRDM…EDFLRDYTQI (176 aa). 215 to 222 contributes to the ATP binding site; the sequence is AQTGSGKT. Residues 325-328 carry the DEAD box motif; that stretch reads DEAD. The Helicase C-terminal domain occupies 405–552; the sequence is KLIQLMEEIM…AINPKLMQLV (148 aa). Phosphothreonine is present on T523. Residue K528 forms a Glycyl lysine isopeptide (Lys-Gly) (interchain with G-Cter in SUMO2) linkage. Residues 547–729 form a transactivation domain region; sequence KLMQLVDHRG…PPPPPPPSRK (183 aa). Disordered regions lie at residues 551 to 623 and 659 to 729; these read LVDH…GSPN and TYGA…PSRK. Residues 568-578 show a composition bias toward polar residues; sequence RTTSSANNPNL. Residues 583–610 are compositionally biased toward basic and acidic residues; the sequence is ECDRRLRGVKDGGRRDSASYRDRSETDR. A compositionally biased stretch (low complexity) spans 659–688; the sequence is TYGASSTTSTGRSSQSSSQQFSGIGRSGQQ. Omega-N-methylarginine is present on R684. Residues 689-698 are compositionally biased toward polar residues; that stretch reads PQPLMSQQFA. A compositionally biased stretch (pro residues) spans 717-729; the sequence is YPPPPPPPPPSRK. The interaction with YAP1 stretch occupies residues 718–726; sequence PPPPPPPPP.

The protein belongs to the DEAD box helicase family. DDX5/DBP2 subfamily. Interacts with DDX5 in an RNA-independent manner. Interacts with CDK9 transcription elongation complex under basal conditions. Following cell stimulation with poly(I:C), a synthetic double-stranded RNA mimicking viral infection, the interaction with CDK9 is decreased. Interacts with ESR1 in an estrogen-independent manner. Interacts with HNRNPH1; this interaction is important for the regulation of alternative splicing on G-quadruplex structures. At high, but not low, cell density, interacts with DROSHA and DGCR8, the core components of the microprocessor complex involved in the maturation of primary microRNAs (pri-miRNAs) into pre-miRNAs. The interaction with DGCR8 is reduced during mitosis. At low, but not high, cell density, interacts with YAP1 and with its paralog, WWTR1/TAZ. Interactions with DROSHA and YAP1 are mutually exclusive. In vitro, the pre-miRNA processing activity of the DDX17-containing microprocessor complex is weaker than that of the DROSHA/DGCR8 microprocessor complex devoid of DDX17. Interacts with UPF3B. Interacts with NFAT5; this interaction leads to DDX17 recruitment to LNC2 and S100A4 promoters and NFAT5-mediated DDX17-enhanced transactivation. Interacts with HDAC1, HDAC2 and HDAC3; this interaction with HDAC1 and HDAC3, but not HDAC2, depends upon DDX17 acetylation. Interacts with ZC3HAV1 (via N-terminal domain) in an RNA-independent manner. Interacts with EXOSC3/RRP40 and EXOSC5/RRP46; this interaction may be indirect and mediated by ZC3HAV1-binding. Interacts with EP300; this interaction leads to acetylation at lysine residues. Interacts with CREBBP/CBP and KAT2B/P/CAF. Directly interacts with CTNNB1. Interacts with MYOD1. Interacts with TP53. Interacts with DCP1A in an RNA-independent manner. Interacts with DCP2 in an RNA-dependent manner. Interacts with DHX36; this interaction occurs in a RNA-dependent manner. Interacts with ERCC6. In terms of processing, sumoylation significantly increases stability. It also promotes interaction specifically with HDAC1 (but not HDAC2, nor HDAC3) and strongly stimulates ESR1 and TP53 coactivation. Acetylation at lysine residues stabilizes the protein, stimulates interaction with HDAC1 and HDAC3, but not HDAC2, and represses ESR1 and TP53 coactivation activity. As to expression, widely expressed. Low expression, if any, in normal colonic epithelial cells (at protein level). Levels tend to increase during colon cancer progression, from very low in benign hyperplastic polyps to very high in tubular and villous adenomas.

It is found in the nucleus. The protein resides in the nucleolus. Its subcellular location is the cytoplasm. The protein localises to the cytosol. The enzyme catalyses ATP + H2O = ADP + phosphate + H(+). In terms of biological role, as an RNA helicase, unwinds RNA and alters RNA structures through ATP binding and hydrolysis. Involved in multiple cellular processes, including pre-mRNA splicing, alternative splicing, ribosomal RNA processing and miRNA processing, as well as transcription regulation. Regulates the alternative splicing of exons exhibiting specific features. For instance, promotes the inclusion of AC-rich alternative exons in CD44 transcripts. This function requires the RNA helicase activity. Affects NFAT5 and histone macro-H2A.1/MACROH2A1 alternative splicing in a CDK9-dependent manner. In NFAT5, promotes the introduction of alternative exon 4, which contains 2 stop codons and may target NFAT5 exon 4-containing transcripts to nonsense-mediated mRNA decay, leading to the down-regulation of NFAT5 protein. Affects splicing of mediators of steroid hormone signaling pathway, including kinases that phosphorylates ESR1, such as CDK2, MAPK1 and GSK3B, and transcriptional regulators, such as CREBBP, MED1, NCOR1 and NCOR2. By affecting GSK3B splicing, participates in ESR1 and AR stabilization. In myoblasts and epithelial cells, cooperates with HNRNPH1 to control the splicing of specific subsets of exons. In addition to binding mature mRNAs, also interacts with certain pri-microRNAs, including MIR663/miR-663a, MIR99B/miR-99b, and MIR6087/miR-6087. Binds pri-microRNAs on the 3' segment flanking the stem loop via the 5'-[ACG]CAUC[ACU]-3' consensus sequence. Required for the production of subsets of microRNAs, including MIR21 and MIR125B1. May be involved not only in microRNA primary transcript processing, but also stabilization. Participates in MYC down-regulation at high cell density through the production of MYC-targeting microRNAs. Along with DDX5, may be involved in the processing of the 32S intermediate into the mature 28S ribosomal RNA. Promoter-specific transcription regulator, functioning as a coactivator or corepressor depending on the context of the promoter and the transcriptional complex in which it exists. Enhances NFAT5 transcriptional activity. Synergizes with TP53 in the activation of the MDM2 promoter; this activity requires acetylation on lysine residues. May also coactivate MDM2 transcription through a TP53-independent pathway. Coactivates MMP7 transcription. Along with CTNNB1, coactivates MYC, JUN, FOSL1 and cyclin D1/CCND1 transcription. Alone or in combination with DDX5 and/or SRA1 non-coding RNA, plays a critical role in promoting the assembly of proteins required for the formation of the transcription initiation complex and chromatin remodeling leading to coactivation of MYOD1-dependent transcription. This helicase-independent activity is required for skeletal muscle cells to properly differentiate into myotubes. During epithelial-to-mesenchymal transition, coregulates SMAD-dependent transcriptional activity, directly controlling key effectors of differentiation, including miRNAs which in turn directly repress its expression. Plays a role in estrogen and testosterone signaling pathway at several levels. Mediates the use of alternative promoters in estrogen-responsive genes and regulates transcription and splicing of a large number of steroid hormone target genes. Contrary to splicing regulation activity, transcriptional coregulation of the estrogen receptor ESR1 is helicase-independent. Plays a role in innate immunity. Specifically restricts bunyavirus infection, including Rift Valley fever virus (RVFV) or La Crosse virus (LACV), but not vesicular stomatitis virus (VSV), in an interferon- and DROSHA-independent manner. Binds to RVFV RNA, likely via structured viral RNA elements. Promotes mRNA degradation mediated by the antiviral zinc-finger protein ZC3HAV1, in an ATPase-dependent manner. In Homo sapiens (Human), this protein is Probable ATP-dependent RNA helicase DDX17 (DDX17).